The primary structure comprises 758 residues: Polyribonucleotide nucleotidyltransferase (758 aa).

2 residues coordinate Mg(2+): D488 and D494. In terms of domain architecture, KH spans 555 to 614 (PKLYTMKINPEKIRDVIGKGGAVIRALTEETGTQINIDEDGTITIASTDSAKADEAKRRI). The S1 motif domain occupies 624–692 (GKIYEGPVVK…EKGRVKLSMR (69 aa)). A disordered region spans residues 692 to 758 (RALLDRPMGD…AGEHSGQMDA (67 aa)). Residues 707-735 (PAERGERGDRGDRGDRPERGERRERREPA) show a composition bias toward basic and acidic residues. A compositionally biased stretch (low complexity) spans 736 to 745 (GADQQQQQQQ).

Belongs to the polyribonucleotide nucleotidyltransferase family. It depends on Mg(2+) as a cofactor.

The protein resides in the cytoplasm. It carries out the reaction RNA(n+1) + phosphate = RNA(n) + a ribonucleoside 5'-diphosphate. Functionally, involved in mRNA degradation. Catalyzes the phosphorolysis of single-stranded polyribonucleotides processively in the 3'- to 5'-direction. The chain is Polyribonucleotide nucleotidyltransferase from Paracidovorax citrulli (strain AAC00-1) (Acidovorax citrulli).